The chain runs to 935 residues: Potassium channel AKT1 (935 aa).

Residues 1 to 106 (MARWGAARMA…YDRRYRIWET (106 aa)) lie on the Cytoplasmic side of the membrane. A helical transmembrane segment spans residues 107-127 (FLIVLVVYSAWVSPFEFGFIP). Residues 128–136 (KPTGALATA) lie on the Extracellular side of the membrane. A helical membrane pass occupies residues 137 to 157 (DNVVNAFFAVDIILTFFVAYL). The Cytoplasmic segment spans residues 158 to 178 (DKMSYMLEDDPKKIAWRYSTT). Residues 179 to 199 (WLVLDVASTIPSEFARRILPS) traverse the membrane as a helical segment. Topologically, residues 200–205 (KLRSYG) are extracellular. Residues 206 to 226 (FFNMLRLWRLRRVSSLFSRLE) form a helical; Voltage-sensor membrane-spanning segment. The Cytoplasmic portion of the chain corresponds to 227–240 (KDRHFNYFWVRCAK). Residues 241-261 (LICVTLFAVHCAACFYYLLAD) traverse the membrane as a helical segment. Over 262–288 (RYPVPTSTWIGNYMADFHERSLWIRYV) the chain is Extracellular. Residues 289 to 308 (TSVYWSITTLTTVGYGDLHA) constitute an intramembrane region (pore-forming). At 309-312 (ENTR) the chain is on the extracellular side. Residues 313 to 333 (EMIFNIFYMLFNLGLTAYLIG) form a helical membrane-spanning segment. Residues 334–935 (NMTNLVVHGT…WDAEKMKGKS (602 aa)) are Cytoplasmic-facing. Position 419–538 (419–538 (LFQGVSNDLI…TIIMNNLIQF (120 aa))) interacts with a nucleoside 3',5'-cyclic phosphate. ANK repeat units lie at residues 565–594 (DLPI…DPNE), 598–627 (DGHT…DPNA), 631–660 (EGKV…DLSS), 662–691 (DTGL…DVNR), 695–724 (DGTT…DIDK), and 728–757 (NGWT…ATAS). A disordered region spans residues 826–854 (SQAQRETDHPLSRGGLAATGSPNPSSGSR). A compositionally biased stretch (polar residues) spans 845–854 (GSPNPSSGSR). The KHA domain occupies 859 to 935 (RVTISCPEKG…WDAEKMKGKS (77 aa)).

The protein belongs to the potassium channel family. Plant (TC 1.A.1.4) subfamily. As to quaternary structure, the potassium channel is probably a homo- or heterotetrameric complex of pore-forming subunits. Expressed in roots and coleoptile of young seedlings.

Its subcellular location is the membrane. In terms of biological role, highly selective inward-rectifying potassium channel that mediates potassium uptake by plant roots. Assuming opened or closed conformations in response to the voltage difference across the membrane, the channel is activated by hyperpolarization. May be a major salt-sensitive potassium channel in roots. The sequence is that of Potassium channel AKT1 (AKT1) from Oryza sativa subsp. japonica (Rice).